An 886-amino-acid chain; its full sequence is Vam6/Vps39-like protein (886 aa).

One can recognise a CNH domain in the interval P15–I294. A CHCR repeat occupies F573 to S750.

It belongs to the VAM6/VPS39 family. Homooligomer. Interacts with TGFBR2 and, less efficiently, with TGFBR1; interaction with TGFBR2 is independent of the receptor kinase activity and of the presence of TGF-beta. Also interacts with ACVR2B, but not with BMPR2. Interacts with SMAD4, preferentially following TGF-beta treatment. Component of the putative homotypic fusion and vacuole protein sorting (HOPS) complex; the core of which composed of the class C Vps proteins VPS11, VPS16, VPS18 and VPS33A, is associated with VPS39 and VPS41. Interacts with PLEKHM2; involved in VPS39 recruitment to ARL8B-containing lysosomes. Associates with adapter protein complex 3 (AP-3) and clathrin:AP-3 complexes. Interacts with STX17; this interaction is increased in the absence of TMEM39A. Interacts with RAB7, RAB2A and RAB2B. Interacts with RAB2A (GTP-bound); the interaction contributes to obtaining a functional HOPS complex that promotes autophagosome-lysosome membrane fusion driven by STX17-SNAP29-VAMP8. Interacts with RAB39A (GTP-bound) and RAB39B (GTP-bound); interaction with RAB39A contributes to obtaining a functional HOPS complex.

It is found in the cytoplasm. Its subcellular location is the lysosome membrane. The protein localises to the late endosome membrane. Regulator of TGF-beta/activin signaling, inhibiting SMAD3- and activating SMAD2-dependent transcription. Acts by interfering with SMAD3/SMAD4 complex formation, this would lead to inhibition of SMAD3-dependent transcription and relieve SMAD3 inhibition of SMAD2-dependent promoters, thus increasing SMAD2-dependent transcription. Functionally, plays a role in vesicle-mediated protein trafficking to lysosomal compartments including the endocytic membrane transport and autophagic pathways. Acts as a component of the HOPS endosomal tethering complex which is proposed to be involved in the Rab5-to-Rab7 endosome conversion probably implicating MON1A/B, and via binding SNAREs and SNARE complexes to mediate tethering and docking events during SNARE-mediated membrane fusion. The HOPS complex is proposed to be recruited to Rab7 on the late endosomal membrane and to regulate late endocytic, phagocytic and autophagic traffic towards lysosomes. Involved in homotypic vesicle fusions between late endosomes and in heterotypic fusions between late endosomes and lysosomes. Required for fusion of endosomes and autophagosomes with lysosomes. This is Vam6/Vps39-like protein from Mus musculus (Mouse).